Here is a 115-residue protein sequence, read N- to C-terminus: NADH-ubiquinone oxidoreductase chain 3 (115 aa).

Transmembrane regions (helical) follow at residues 4 to 24 (FIVM…AFWL), 55 to 75 (FFLV…LLPL), and 86 to 106 (ITML…AYEW).

It belongs to the complex I subunit 3 family. Core subunit of respiratory chain NADH dehydrogenase (Complex I) which is composed of 45 different subunits. Interacts with TMEM186. Interacts with TMEM242.

It localises to the mitochondrion inner membrane. It carries out the reaction a ubiquinone + NADH + 5 H(+)(in) = a ubiquinol + NAD(+) + 4 H(+)(out). Functionally, core subunit of the mitochondrial membrane respiratory chain NADH dehydrogenase (Complex I) which catalyzes electron transfer from NADH through the respiratory chain, using ubiquinone as an electron acceptor. Essential for the catalytic activity of complex I. The chain is NADH-ubiquinone oxidoreductase chain 3 from Reithrodontomys fulvescens (Fulvous harvest mouse).